Consider the following 299-residue polypeptide: MGIFVWRSSLSMTNIRWLHHRCLSLYNSSHGFNEAKIKKKLAQFTGGSVDLSKSDDGIAEICINNPTRMNAFTGTMMIELEERISDLENWQDGKGLIVYGAENTFCSGSDLNAVKAISNPQEGMMMCMLMQNTLTRLQRLPLVSVALIQGKALGGGAELCTACDFRLMTEGSEIRFVHKQMGLVPGWGGAARLIHIVGSRHALKLLSGAPRVQPENALELGLADNILTGTEAGVLSEAKNWIMPYIKGPSDVTRAVKKVIISGREQNLEDALRTEKEIFGTVWGGLANLQALAKGTKHK.

The protein belongs to the enoyl-CoA hydratase/isomerase family.

Its subcellular location is the cytoplasm. The protein resides in the cytosol. The catalysed reaction is (2S)-ethylmalonyl-CoA + H(+) = butanoyl-CoA + CO2. The enzyme catalyses (S)-methylmalonyl-CoA + H(+) = propanoyl-CoA + CO2. It carries out the reaction (2R)-ethylmalonyl-CoA + H(+) = butanoyl-CoA + CO2. In terms of biological role, decarboxylates ethylmalonyl-CoA, a potentially toxic metabolite, to form butyryl-CoA, suggesting it might be involved in metabolite proofreading. Acts preferentially on (S)-ethylmalonyl-CoA but also has some activity on the (R)-isomer. Also has methylmalonyl-CoA decarboxylase activity at lower level. This is Ethylmalonyl-CoA decarboxylase (echdc1) from Xenopus laevis (African clawed frog).